We begin with the raw amino-acid sequence, 286 residues long: 4-hydroxy-3-methylbut-2-enyl diphosphate reductase (286 aa).

[4Fe-4S] cluster is bound at residue Cys-12. 2 residues coordinate (2E)-4-hydroxy-3-methylbut-2-enyl diphosphate: His-47 and His-80. His-47 and His-80 together coordinate dimethylallyl diphosphate. Isopentenyl diphosphate contacts are provided by His-47 and His-80. [4Fe-4S] cluster is bound at residue Cys-102. His-130 is a (2E)-4-hydroxy-3-methylbut-2-enyl diphosphate binding site. Residue His-130 coordinates dimethylallyl diphosphate. His-130 is an isopentenyl diphosphate binding site. Glu-132 functions as the Proton donor in the catalytic mechanism. Thr-170 is a (2E)-4-hydroxy-3-methylbut-2-enyl diphosphate binding site. [4Fe-4S] cluster is bound at residue Cys-198. (2E)-4-hydroxy-3-methylbut-2-enyl diphosphate contacts are provided by Ser-226, Asn-228, and Ser-270. Ser-226, Asn-228, and Ser-270 together coordinate dimethylallyl diphosphate. 3 residues coordinate isopentenyl diphosphate: Ser-226, Asn-228, and Ser-270.

This sequence belongs to the IspH family. Requires [4Fe-4S] cluster as cofactor.

The catalysed reaction is isopentenyl diphosphate + 2 oxidized [2Fe-2S]-[ferredoxin] + H2O = (2E)-4-hydroxy-3-methylbut-2-enyl diphosphate + 2 reduced [2Fe-2S]-[ferredoxin] + 2 H(+). The enzyme catalyses dimethylallyl diphosphate + 2 oxidized [2Fe-2S]-[ferredoxin] + H2O = (2E)-4-hydroxy-3-methylbut-2-enyl diphosphate + 2 reduced [2Fe-2S]-[ferredoxin] + 2 H(+). Its pathway is isoprenoid biosynthesis; dimethylallyl diphosphate biosynthesis; dimethylallyl diphosphate from (2E)-4-hydroxy-3-methylbutenyl diphosphate: step 1/1. It participates in isoprenoid biosynthesis; isopentenyl diphosphate biosynthesis via DXP pathway; isopentenyl diphosphate from 1-deoxy-D-xylulose 5-phosphate: step 6/6. Its function is as follows. Catalyzes the conversion of 1-hydroxy-2-methyl-2-(E)-butenyl 4-diphosphate (HMBPP) into a mixture of isopentenyl diphosphate (IPP) and dimethylallyl diphosphate (DMAPP). Acts in the terminal step of the DOXP/MEP pathway for isoprenoid precursor biosynthesis. This Desulfovibrio desulfuricans (strain ATCC 27774 / DSM 6949 / MB) protein is 4-hydroxy-3-methylbut-2-enyl diphosphate reductase.